We begin with the raw amino-acid sequence, 209 residues long: PRA1 family protein A1 (209 aa).

4 helical membrane-spanning segments follow: residues 51-73 (LYYY…VLTR), 77-99 (IFAA…GSFS), 144-164 (VFVL…SGLL), and 166-186 (VSVA…LRTP).

It belongs to the PRA1 family.

It is found in the endoplasmic reticulum membrane. Functionally, may be involved in both secretory and endocytic intracellular trafficking in the endosomal/prevacuolar compartments. The protein is PRA1 family protein A1 (PRA1A1) of Arabidopsis thaliana (Mouse-ear cress).